The primary structure comprises 212 residues: Placenta-specific protein 1 (212 aa).

The signal sequence occupies residues 1–22 (MKVFKFIGLMILLTSAFSAGSG).

The protein belongs to the PLAC1 family. As to expression, expressed in placenta. Localizes primarily to differentiated syncytiotrophoblast throughout gestation as well as to a small population of villous cytotrophoblasts. Also detected in maternal blood and rapidly disappears following delivery, but is not detected in other adult or fetal tissues examined.

Its subcellular location is the secreted. May play a role in placental development. This is Placenta-specific protein 1 from Homo sapiens (Human).